A 271-amino-acid polypeptide reads, in one-letter code: Methylcorrinoid:tetrahydrofolate methyltransferase (271 aa).

Residues 1-247 (MIIIGEKLNG…GAIFATDALL (247 aa)) enclose the Pterin-binding domain.

Belongs to the vitamin-B12 dependent methionine synthase family. The proline betaine:THF methyl transfer system is composed of two methyltransferases, MtpB and MtqA, and the corrinoid protein MtqC. The L-carnitine:THF methyl transfer system is composed of two methyltransferases, MtcB and MtqA, and the corrinoid protein MtqC.

It catalyses the reaction methyl-Co(III)-[quaternary-amine-specific corrinoid protein] + (6S)-5,6,7,8-tetrahydrofolate = Co(I)-[quaternary-amine-specific corrinoid protein] + (6S)-5-methyl-5,6,7,8-tetrahydrofolate + H(+). In terms of biological role, involved in the degradation of the quaternary amines L-proline betaine and L-carnitine. Component of a corrinoid-dependent methyltransferase system that transfers a methyl group from L-proline betaine or L-carnitine to tetrahydrofolate (THF), forming methyl-THF, a key intermediate in the Wood-Ljungdahl acetogenesis pathway. MtqA catalyzes the transfer of a methyl group from the methylated corrinoid protein MtqC to THF, forming methyl-THF. In Eubacterium limosum, this protein is Methylcorrinoid:tetrahydrofolate methyltransferase.